The sequence spans 630 residues: 1,4-alpha-glucan branching enzyme GlgB (630 aa).

Asp-308 (nucleophile) is an active-site residue. Residue Glu-361 is the Proton donor of the active site.

This sequence belongs to the glycosyl hydrolase 13 family. GlgB subfamily. As to quaternary structure, monomer.

It catalyses the reaction Transfers a segment of a (1-&gt;4)-alpha-D-glucan chain to a primary hydroxy group in a similar glucan chain.. The protein operates within glycan biosynthesis; glycogen biosynthesis. Catalyzes the formation of the alpha-1,6-glucosidic linkages in glycogen by scission of a 1,4-alpha-linked oligosaccharide from growing alpha-1,4-glucan chains and the subsequent attachment of the oligosaccharide to the alpha-1,6 position. The polypeptide is 1,4-alpha-glucan branching enzyme GlgB (Halothermothrix orenii (strain H 168 / OCM 544 / DSM 9562)).